A 526-amino-acid polypeptide reads, in one-letter code: Glucose-6-phosphate 1-dehydrogenase (526 aa).

NADP(+) contacts are provided by residues 50-57 (GASGDLAK), arginine 84, and lysine 184. D-glucose 6-phosphate is bound by residues lysine 184, 214-218 (HYLGK), glutamate 252, and aspartate 271. Histidine 276 functions as the Proton acceptor in the catalytic mechanism. Residue arginine 370 coordinates NADP(+). D-glucose 6-phosphate contacts are provided by lysine 373 and arginine 378. 3 residues coordinate NADP(+): lysine 379, arginine 383, and arginine 406. Position 408 (glutamine 408) interacts with D-glucose 6-phosphate. NADP(+) contacts are provided by residues 414 to 416 (YFK), 434 to 436 (DLT), arginine 500, tyrosine 516, and tryptophan 522.

The protein belongs to the glucose-6-phosphate dehydrogenase family.

It is found in the cytoplasm. Its subcellular location is the cytosol. It catalyses the reaction D-glucose 6-phosphate + NADP(+) = 6-phospho-D-glucono-1,5-lactone + NADPH + H(+). Its pathway is carbohydrate degradation; pentose phosphate pathway; D-ribulose 5-phosphate from D-glucose 6-phosphate (oxidative stage): step 1/3. Functionally, cytosolic glucose-6-phosphate dehydrogenase that catalyzes the first and rate-limiting step of the oxidative branch within the pentose phosphate pathway/shunt, an alternative route to glycolysis for the dissimilation of carbohydrates and a major source of reducing power and metabolic intermediates for fatty acid and nucleic acid biosynthetic processes. This chain is Glucose-6-phosphate 1-dehydrogenase (ZW), found in Ceratitis capitata (Mediterranean fruit fly).